Reading from the N-terminus, the 374-residue chain is Calcium/calmodulin-dependent protein kinase type 1 (374 aa).

The Protein kinase domain maps to 20–276 (YDFRDVLGTG…CEQALQHPWI (257 aa)). ATP is bound by residues 26-34 (LGTGAFSEV) and K49. K59 is covalently cross-linked (Glycyl lysine isopeptide (Lys-Gly) (interchain with G-Cter in ubiquitin)). The active-site Proton acceptor is the D141. Position 177 is a phosphothreonine; by CaMKK1 and CaMKK2 (T177). Residues 263–264 (KR) carry the Involved in nuclear import motif. An autoinhibitory domain region spans residues 276–316 (IAGDTALDKNIHQSVSEQIKKNFAKSKWKQAFNATAVVRHM). Residues 296–317 (KNFAKSKWKQAFNATAVVRHMR) form a calmodulin-binding region. A Nuclear export signal motif is present at residues 315–321 (HMRKLQL).

It belongs to the protein kinase superfamily. CAMK Ser/Thr protein kinase family. CaMK subfamily. Monomer. Interacts with XPO1. Phosphorylated by CaMKK1 and CaMKK2 on Thr-177. Post-translationally, polybiquitinated by the E3 ubiquitin-protein ligase complex SCF(FBXL12), leading to proteasomal degradation. In terms of tissue distribution, widely expressed.

The protein resides in the cytoplasm. It is found in the nucleus. It catalyses the reaction L-seryl-[protein] + ATP = O-phospho-L-seryl-[protein] + ADP + H(+). It carries out the reaction L-threonyl-[protein] + ATP = O-phospho-L-threonyl-[protein] + ADP + H(+). Its activity is regulated as follows. Activated by Ca(2+)/calmodulin. Binding of calmodulin results in conformational change that relieves intrasteric autoinhibition and allows phosphorylation of Thr-177 within the activation loop by CaMKK1 or CaMKK2. Phosphorylation of Thr-177 results in several fold increase in total activity. Unlike CaMK4, is unable to exhibit autonomous activity after Ca(2+)/calmodulin activation. Calcium/calmodulin-dependent protein kinase that operates in the calcium-triggered CaMKK-CaMK1 signaling cascade and, upon calcium influx, regulates transcription activators activity, cell cycle, hormone production, cell differentiation, actin filament organization and neurite outgrowth. Recognizes the substrate consensus sequence [MVLIF]-x-R-x(2)-[ST]-x(3)-[MVLIF]. Regulates axonal extension and growth cone motility in hippocampal and cerebellar nerve cells. Upon NMDA receptor-mediated Ca(2+) elevation, promotes dendritic growth in hippocampal neurons and is essential in synapses for full long-term potentiation (LTP) and ERK2-dependent translational activation. Downstream of NMDA receptors, promotes the formation of spines and synapses in hippocampal neurons by phosphorylating ARHGEF7/BETAPIX on 'Ser-516', which results in the enhancement of ARHGEF7 activity and activation of RAC1. Promotes neuronal differentiation and neurite outgrowth by activation and phosphorylation of MARK2 on 'Ser-91', 'Ser-92', 'Ser-93' and 'Ser-294'. Promotes nuclear export of HDAC5 and binding to 14-3-3 by phosphorylation of 'Ser-259' and 'Ser-498' in the regulation of muscle cell differentiation. Regulates NUMB-mediated endocytosis by phosphorylation of NUMB on 'Ser-275' and 'Ser-294'. Involved in the regulation of basal and estrogen-stimulated migration of medulloblastoma cells through ARHGEF7/BETAPIX phosphorylation. Is required for proper activation of cyclin-D1/CDK4 complex during G1 progression in diploid fibroblasts. Plays a role in K(+) and ANG2-mediated regulation of the aldosterone synthase (CYP11B2) to produce aldosterone in the adrenal cortex. Phosphorylates EIF4G3/eIF4GII. In vitro phosphorylates CREB1, ATF1, CFTR, MYL9 and SYN1/synapsin I. The protein is Calcium/calmodulin-dependent protein kinase type 1 (Camk1) of Rattus norvegicus (Rat).